The sequence spans 195 residues: dCTP deaminase (195 aa).

DCTP is bound by residues 110–115 (RSSLAR), aspartate 128, 136–138 (VLE), tyrosine 171, lysine 178, and glutamine 182. Residue glutamate 138 is the Proton donor/acceptor of the active site. Residues 169 to 179 (RPYSSRKDAKY) are compositionally biased toward basic and acidic residues. The interval 169 to 195 (RPYSSRKDAKYKNQQSAVASRIDEDKE) is disordered.

Belongs to the dCTP deaminase family. As to quaternary structure, homotrimer.

It carries out the reaction dCTP + H2O + H(+) = dUTP + NH4(+). Its pathway is pyrimidine metabolism; dUMP biosynthesis; dUMP from dCTP (dUTP route): step 1/2. Catalyzes the deamination of dCTP to dUTP. The sequence is that of dCTP deaminase from Haemophilus influenzae (strain 86-028NP).